The primary structure comprises 169 residues: Peptide deformylase (169 aa).

C91 and H133 together coordinate Fe cation. The active site involves E134. H137 serves as a coordination point for Fe cation.

Belongs to the polypeptide deformylase family. Fe(2+) serves as cofactor.

The enzyme catalyses N-terminal N-formyl-L-methionyl-[peptide] + H2O = N-terminal L-methionyl-[peptide] + formate. Its function is as follows. Removes the formyl group from the N-terminal Met of newly synthesized proteins. Requires at least a dipeptide for an efficient rate of reaction. N-terminal L-methionine is a prerequisite for activity but the enzyme has broad specificity at other positions. In Citrobacter koseri (strain ATCC BAA-895 / CDC 4225-83 / SGSC4696), this protein is Peptide deformylase.